A 381-amino-acid polypeptide reads, in one-letter code: Fe-S cluster assembly protein DRE2 (381 aa).

The tract at residues 8–165 (AQGSGRFLLL…KPDFGAQQAV (158 aa)) is N-terminal SAM-like domain. Residues 100 to 134 (RNRDNQIWGSGSDSAAGLGSSDGDGGGGEKMSSSE) are disordered. The span at 108–118 (GSGSDSAAGLG) shows a compositional bias: low complexity. Residues 119 to 128 (SSDGDGGGGE) are compositionally biased toward gly residues. The linker stretch occupies residues 166 to 273 (PLKLGRKKNL…EEELLGEYDM (108 aa)). Positions 283, 294, 297, and 299 each coordinate [2Fe-2S] cluster. A fe-S binding site A region spans residues 283–299 (CRPKAGKRRRACKDCTC). 4 residues coordinate [4Fe-4S] cluster: Cys-344, Cys-347, Cys-355, and Cys-358. 2 short sequence motifs (cx2C motif) span residues 344–347 (CGNC) and 355–358 (CDGC). A fe-S binding site B region spans residues 344–358 (CGNCALGDAFRCDGC).

This sequence belongs to the anamorsin family. As to quaternary structure, monomer. Interacts with TAH18. Interacts with MIA40. [2Fe-2S] cluster is required as a cofactor. The cofactor is [4Fe-4S] cluster.

The protein localises to the cytoplasm. Its subcellular location is the mitochondrion intermembrane space. Functionally, component of the cytosolic iron-sulfur (Fe-S) protein assembly (CIA) machinery required for the maturation of extramitochondrial Fe-S proteins. Part of an electron transfer chain functioning in an early step of cytosolic Fe-S biogenesis, facilitating the de novo assembly of a [4Fe-4S] cluster on the scaffold complex CFD1-NBP35. Electrons are transferred to DRE2 from NADPH via the FAD- and FMN-containing protein TAH18. TAH18-DRE2 are also required for the assembly of the diferric tyrosyl radical cofactor of ribonucleotide reductase (RNR), probably by providing electrons for reduction during radical cofactor maturation in the catalytic small subunit RNR2. The chain is Fe-S cluster assembly protein DRE2 from Paracoccidioides brasiliensis (strain Pb18).